The chain runs to 270 residues: uncharacterized protein (270 aa).

Residues 34–266 (LIARGLTKSY…PDVRRLYLGD (233 aa)) enclose the ABC transporter domain. 66 to 73 (GPNGAGKT) contacts ATP.

The protein belongs to the ABC transporter superfamily.

This is an uncharacterized protein from Rhizobium meliloti (strain 1021) (Ensifer meliloti).